Consider the following 406-residue polypeptide: Succinylornithine transaminase (406 aa).

Lysine 252 is modified (N6-(pyridoxal phosphate)lysine).

This sequence belongs to the class-III pyridoxal-phosphate-dependent aminotransferase family. AstC subfamily. It depends on pyridoxal 5'-phosphate as a cofactor.

The enzyme catalyses N(2)-succinyl-L-ornithine + 2-oxoglutarate = N-succinyl-L-glutamate 5-semialdehyde + L-glutamate. It functions in the pathway amino-acid degradation; L-arginine degradation via AST pathway; L-glutamate and succinate from L-arginine: step 3/5. Catalyzes the transamination of N(2)-succinylornithine and alpha-ketoglutarate into N(2)-succinylglutamate semialdehyde and glutamate. Can also act as an acetylornithine aminotransferase. In Citrobacter koseri (strain ATCC BAA-895 / CDC 4225-83 / SGSC4696), this protein is Succinylornithine transaminase.